A 378-amino-acid polypeptide reads, in one-letter code: Putative protein YbfL (378 aa).

It belongs to the transposase 11 family.

The polypeptide is Putative protein YbfL (ybfL) (Escherichia coli (strain K12)).